The primary structure comprises 610 residues: UvrABC system protein C (610 aa).

The 79-residue stretch at 16–94 folds into the GIY-YIG domain; it reads SQPGVYRMYD…IKLYQPRYNV (79 aa). A UVR domain is found at 204–239; the sequence is DQVLTQLIARMEKASQDLAFEEAARIRDQIQAVRRV.

This sequence belongs to the UvrC family. As to quaternary structure, interacts with UvrB in an incision complex.

The protein resides in the cytoplasm. In terms of biological role, the UvrABC repair system catalyzes the recognition and processing of DNA lesions. UvrC both incises the 5' and 3' sides of the lesion. The N-terminal half is responsible for the 3' incision and the C-terminal half is responsible for the 5' incision. The chain is UvrABC system protein C from Salmonella typhi.